Consider the following 387-residue polypeptide: Phosphoglycerate kinase (387 aa).

Substrate is bound by residues 21-23 (DLN), Arg36, and 59-62 (HLGR). Lys84 is modified (N6-acetyllysine). Arg113 and Arg146 together coordinate substrate. Residues Lys197, Glu314, and 340 to 343 (GGDT) contribute to the ATP site.

It belongs to the phosphoglycerate kinase family. In terms of assembly, monomer.

It localises to the cytoplasm. It catalyses the reaction (2R)-3-phosphoglycerate + ATP = (2R)-3-phospho-glyceroyl phosphate + ADP. It functions in the pathway carbohydrate degradation; glycolysis; pyruvate from D-glyceraldehyde 3-phosphate: step 2/5. The polypeptide is Phosphoglycerate kinase (pgk) (Escherichia coli O157:H7).